The primary structure comprises 420 residues: L-cysteine:1D-myo-inositol 2-amino-2-deoxy-alpha-D-glucopyranoside ligase (420 aa).

Position 48 (cysteine 48) interacts with Zn(2+). L-cysteinyl-5'-AMP contacts are provided by residues 48–51 (CGIT), threonine 63, and 86–88 (NIT). The short motif at 50-60 (ITPYDSTHLGH) is the 'HIGH' region element. The 'ERGGDP' region motif lies at 192–197 (ERGGDP). An L-cysteinyl-5'-AMP-binding site is contributed by tryptophan 232. Residue cysteine 236 participates in Zn(2+) binding. 254 to 256 (GSD) is an L-cysteinyl-5'-AMP binding site. Residue histidine 261 coordinates Zn(2+). L-cysteinyl-5'-AMP is bound at residue isoleucine 288. Positions 294–298 (KMSKS) match the 'KMSKS' region motif.

The protein belongs to the class-I aminoacyl-tRNA synthetase family. MshC subfamily. As to quaternary structure, monomer. It depends on Zn(2+) as a cofactor.

It catalyses the reaction 1D-myo-inositol 2-amino-2-deoxy-alpha-D-glucopyranoside + L-cysteine + ATP = 1D-myo-inositol 2-(L-cysteinylamino)-2-deoxy-alpha-D-glucopyranoside + AMP + diphosphate + H(+). Catalyzes the ATP-dependent condensation of GlcN-Ins and L-cysteine to form L-Cys-GlcN-Ins. The sequence is that of L-cysteine:1D-myo-inositol 2-amino-2-deoxy-alpha-D-glucopyranoside ligase from Corynebacterium glutamicum (strain R).